Consider the following 345-residue polypeptide: Beta-ketoacyl-[acyl-carrier-protein] synthase III (345 aa).

Residues Cys114 and His272 contribute to the active site. The ACP-binding stretch occupies residues 273-277; the sequence is QANQR. Asn302 is a catalytic residue.

This sequence belongs to the thiolase-like superfamily. FabH family. As to quaternary structure, homodimer.

The protein resides in the cytoplasm. The catalysed reaction is malonyl-[ACP] + acetyl-CoA + H(+) = 3-oxobutanoyl-[ACP] + CO2 + CoA. It functions in the pathway lipid metabolism; fatty acid biosynthesis. In terms of biological role, catalyzes the condensation reaction of fatty acid synthesis by the addition to an acyl acceptor of two carbons from malonyl-ACP. Catalyzes the first condensation reaction which initiates fatty acid synthesis and may therefore play a role in governing the total rate of fatty acid production. Possesses both acetoacetyl-ACP synthase and acetyl transacylase activities. Its substrate specificity determines the biosynthesis of branched-chain and/or straight-chain of fatty acids. In Rhodopirellula baltica (strain DSM 10527 / NCIMB 13988 / SH1), this protein is Beta-ketoacyl-[acyl-carrier-protein] synthase III.